A 391-amino-acid chain; its full sequence is Matrix metalloproteinase-23 (391 aa).

Topologically, residues 1–18 are cytoplasmic; the sequence is MGCRACLRPEASGAVQGR. Residues 1–79 constitute a propeptide that is removed on maturation; the sequence is MGCRACLRPE…LTMSVTRRRR (79 aa). A helical transmembrane segment spans residues 19 to 39; that stretch reads WLGAALSGLCLLSALALLEWL. Residues 40–391 lie on the Lumenal side of the membrane; sequence GAPTETAWRA…TYSWRVRVRN (352 aa). N-linked (GlcNAc...) asparagine glycans are attached at residues N93 and N149. H212 serves as a coordination point for Zn(2+). E213 is a catalytic residue. Zn(2+) is bound by residues H216 and H222. Residue N233 is glycosylated (N-linked (GlcNAc...) asparagine). The region spanning 256-290 is the ShKT domain; that stretch reads CLDRIFVCASWARKGFCDVRQRLMKRLCPRSCDFC. Disulfide bonds link C256/C290, C263/C283, and C272/C287. In terms of domain architecture, Ig-like C2-type spans 298–383; the sequence is VATTTSPTRT…RRHQRVLSTY (86 aa). N317 is a glycosylation site (N-linked (GlcNAc...) asparagine). A disulfide bond links C322 and C371.

This sequence belongs to the peptidase M10A family. It depends on Zn(2+) as a cofactor. N-glycosylated. Post-translationally, proteolytic cleavage might yield an active form. As to expression, expressed at relatively high level in heart, lung and spleen. Not detected in brain, liver, skeletal muscle, kidney and testis.

The protein resides in the endoplasmic reticulum membrane. The protein localises to the membrane. Inhibited by TIMP2. Protease. May regulate the surface expression of some potassium channels by retaining them in the endoplasmic reticulum. The chain is Matrix metalloproteinase-23 (Mmp23) from Mus musculus (Mouse).